Reading from the N-terminus, the 46-residue chain is Alpha-1-antiproteinase (46 aa).

S30 is subject to Phosphoserine.

This sequence belongs to the serpin family. Post-translationally, N-glycosylated; contains bi- and triantennary glycans with a bisecting N-acetylglucosamine and fucose residue. As to expression, plasma.

It is found in the secreted. The polypeptide is Alpha-1-antiproteinase (Notamacropus eugenii (Tammar wallaby)).